Reading from the N-terminus, the 678-residue chain is RNA helicase NPH-II (678 aa).

Residues 175–351 (FTSWARRVPV…EFFAESVFVH (177 aa)) form the Helicase ATP-binding domain. ATP is bound at residue 188-195 (GDTGVGKT). The DEXH box signature appears at 300–303 (DEVH). Residues 371-546 (PLNRFMYIEE…VFDLQLPEDL (176 aa)) enclose the Helicase C-terminal domain.

Belongs to the DEAD box helicase family. DEAH subfamily. In terms of assembly, monomer.

It localises to the virion. It carries out the reaction ATP + H2O = ADP + phosphate + H(+). Its function is as follows. NTP-dependent helicase that catalyzes unidirectional unwinding of 3'tailed duplex RNAs and plays an important role during transcription of early mRNAs, presumably by preventing R-loop formation behind the elongating RNA polymerase. Might also play a role in the export of newly synthesized mRNA chains out of the core into the cytoplasm. Required for replication and propagation of viral particles. In Oryctolagus cuniculus (Rabbit), this protein is RNA helicase NPH-II (OPG084).